The primary structure comprises 38 residues: Defensin (38 aa).

3 disulfide bridges follow: Cys-4/Cys-26, Cys-11/Cys-34, and Cys-15/Cys-36.

The protein belongs to the invertebrate defensin family. Type 2 subfamily.

It is found in the secreted. Mediates the inducible antibacterial activity in larvae of A.cyanea. This is Defensin from Aeshna cyanea (Southern hawker dragonfly).